Consider the following 264-residue polypeptide: S-adenosylmethionine decarboxylase proenzyme (264 aa).

The Schiff-base intermediate with substrate; via pyruvic acid role is filled by Ser113. A Pyruvic acid (Ser); by autocatalysis modification is found at Ser113. The active-site Proton acceptor; for processing activity is His118. Cys141 functions as the Proton donor; for catalytic activity in the catalytic mechanism.

Belongs to the prokaryotic AdoMetDC family. Type 2 subfamily. Heterooctamer of four alpha and four beta chains arranged as a tetramer of alpha/beta heterodimers. It depends on pyruvate as a cofactor. Is synthesized initially as an inactive proenzyme. Formation of the active enzyme involves a self-maturation process in which the active site pyruvoyl group is generated from an internal serine residue via an autocatalytic post-translational modification. Two non-identical subunits are generated from the proenzyme in this reaction, and the pyruvate is formed at the N-terminus of the alpha chain, which is derived from the carboxyl end of the proenzyme. The post-translation cleavage follows an unusual pathway, termed non-hydrolytic serinolysis, in which the side chain hydroxyl group of the serine supplies its oxygen atom to form the C-terminus of the beta chain, while the remainder of the serine residue undergoes an oxidative deamination to produce ammonia and the pyruvoyl group blocking the N-terminus of the alpha chain.

The catalysed reaction is S-adenosyl-L-methionine + H(+) = S-adenosyl 3-(methylsulfanyl)propylamine + CO2. The protein operates within amine and polyamine biosynthesis; S-adenosylmethioninamine biosynthesis; S-adenosylmethioninamine from S-adenosyl-L-methionine: step 1/1. In terms of biological role, catalyzes the decarboxylation of S-adenosylmethionine to S-adenosylmethioninamine (dcAdoMet), the propylamine donor required for the synthesis of the polyamines spermine and spermidine from the diamine putrescine. The polypeptide is S-adenosylmethionine decarboxylase proenzyme (Azotobacter vinelandii (strain DJ / ATCC BAA-1303)).